We begin with the raw amino-acid sequence, 126 residues long: Large ribosomal subunit protein bL19 (126 aa).

Belongs to the bacterial ribosomal protein bL19 family.

Its function is as follows. This protein is located at the 30S-50S ribosomal subunit interface and may play a role in the structure and function of the aminoacyl-tRNA binding site. This is Large ribosomal subunit protein bL19 from Thiobacillus denitrificans (strain ATCC 25259 / T1).